We begin with the raw amino-acid sequence, 684 residues long: Fermitin family homolog 2 (684 aa).

The segment at 40-81 (HIGGVMLKLVEKLDVKKDWSDHALWWEKKKTWLLKTHWTLDK) is interaction with membranes containing phosphatidylinositol phosphate. A disordered region spans residues 141–163 (LRKPRDPKKKKKKLEDAEEETLE). Residues 279-577 (DLNPKYDAIR…SLPEFGITHF (299 aa)) form the FERM domain. In terms of domain architecture, PH spans 378-474 (KVFKPKKLTL…WMAACRLASK (97 aa)). Residue Lys381 participates in a 1,2-diacyl-sn-glycero-3-phospho-(1D-myo-inositol-3,4,5-trisphosphate) binding.

This sequence belongs to the kindlin family.

Its subcellular location is the cytoplasm. It localises to the cell cortex. The protein resides in the cytoskeleton. The protein localises to the stress fiber. It is found in the cell junction. Its subcellular location is the focal adhesion. It localises to the membrane. The protein resides in the cell projection. The protein localises to the lamellipodium membrane. It is found in the nucleus. Its subcellular location is the myofibril. It localises to the sarcomere. The protein resides in the i band. The protein localises to the cell surface. Functionally, scaffolding protein that enhances integrin activation mediated by TLN1 and/or TLN2, but activates integrins only weakly by itself. Binds to membranes enriched in phosphoinositides. Enhances integrin-mediated cell adhesion onto the extracellular matrix and cell spreading; this requires both its ability to interact with integrins and with phospholipid membranes. Required for the assembly of focal adhesions. Participates in the connection between extracellular matrix adhesion sites and the actin cytoskeleton and also in the orchestration of actin assembly and cell shape modulation. Plays a role in the TGFB1 and integrin signaling pathways. Stabilizes active CTNNB1 and plays a role in the regulation of transcription mediated by CTNNB1 and TCF7L2/TCF4 and in Wnt signaling. Required for normal embryonic development, including normal heart morphogenesis and normal angiogenesis. The chain is Fermitin family homolog 2 (fermt2) from Danio rerio (Zebrafish).